The primary structure comprises 819 residues: Phenylalanine--tRNA ligase beta subunit (819 aa).

The region spanning Arg42–Ala154 is the tRNA-binding domain. The region spanning Leu412 to Leu488 is the B5 domain. Residues Asp466, Asp472, Glu475, and Glu476 each coordinate Mg(2+). The FDX-ACB domain maps to Pro726–Arg819.

This sequence belongs to the phenylalanyl-tRNA synthetase beta subunit family. Type 1 subfamily. In terms of assembly, tetramer of two alpha and two beta subunits. It depends on Mg(2+) as a cofactor.

Its subcellular location is the cytoplasm. The enzyme catalyses tRNA(Phe) + L-phenylalanine + ATP = L-phenylalanyl-tRNA(Phe) + AMP + diphosphate + H(+). In Porphyromonas gingivalis (strain ATCC BAA-308 / W83), this protein is Phenylalanine--tRNA ligase beta subunit.